Consider the following 303-residue polypeptide: UDP-3-O-acyl-N-acetylglucosamine deacetylase (303 aa).

H78, H237, and D241 together coordinate Zn(2+). H264 (proton donor) is an active-site residue.

The protein belongs to the LpxC family. Zn(2+) serves as cofactor.

The catalysed reaction is a UDP-3-O-[(3R)-3-hydroxyacyl]-N-acetyl-alpha-D-glucosamine + H2O = a UDP-3-O-[(3R)-3-hydroxyacyl]-alpha-D-glucosamine + acetate. The protein operates within glycolipid biosynthesis; lipid IV(A) biosynthesis; lipid IV(A) from (3R)-3-hydroxytetradecanoyl-[acyl-carrier-protein] and UDP-N-acetyl-alpha-D-glucosamine: step 2/6. Its function is as follows. Catalyzes the hydrolysis of UDP-3-O-myristoyl-N-acetylglucosamine to form UDP-3-O-myristoylglucosamine and acetate, the committed step in lipid A biosynthesis. This is UDP-3-O-acyl-N-acetylglucosamine deacetylase from Azotobacter vinelandii (strain DJ / ATCC BAA-1303).